We begin with the raw amino-acid sequence, 552 residues long: CTP synthase (552 aa).

The segment at 1–267 is amidoligase domain; sequence MSKFVFVTGG…AHQTLELLRM (267 aa). Ser-13 provides a ligand contact to CTP. Ser-13 serves as a coordination point for UTP. ATP contacts are provided by residues 14–19 and Asp-71; that span reads SIGKGI. Mg(2+) is bound by residues Asp-71 and Glu-141. CTP contacts are provided by residues 148–150, 188–193, and Lys-224; these read DIE and KTKPTQ. Residues 188–193 and Lys-224 contribute to the UTP site; that span reads KTKPTQ. The Glutamine amidotransferase type-1 domain maps to 292-534; it reads TVALVGKYVQ…INAVLKRRNA (243 aa). An L-glutamine-binding site is contributed by Gly-354. The Nucleophile; for glutamine hydrolysis role is filled by Cys-381. L-glutamine contacts are provided by residues 382–385, Glu-405, and Arg-462; that span reads LGMQ. Residues His-507 and Glu-509 contribute to the active site.

This sequence belongs to the CTP synthase family. As to quaternary structure, homotetramer.

It catalyses the reaction UTP + L-glutamine + ATP + H2O = CTP + L-glutamate + ADP + phosphate + 2 H(+). The enzyme catalyses L-glutamine + H2O = L-glutamate + NH4(+). The catalysed reaction is UTP + NH4(+) + ATP = CTP + ADP + phosphate + 2 H(+). Its pathway is pyrimidine metabolism; CTP biosynthesis via de novo pathway; CTP from UDP: step 2/2. Its activity is regulated as follows. Allosterically activated by GTP, when glutamine is the substrate; GTP has no effect on the reaction when ammonia is the substrate. The allosteric effector GTP functions by stabilizing the protein conformation that binds the tetrahedral intermediate(s) formed during glutamine hydrolysis. Inhibited by the product CTP, via allosteric rather than competitive inhibition. Functionally, catalyzes the ATP-dependent amination of UTP to CTP with either L-glutamine or ammonia as the source of nitrogen. Regulates intracellular CTP levels through interactions with the four ribonucleotide triphosphates. The sequence is that of CTP synthase from Synechocystis sp. (strain ATCC 27184 / PCC 6803 / Kazusa).